Here is a 224-residue protein sequence, read N- to C-terminus: Cytidylate kinase (224 aa).

11-19 contributes to the ATP binding site; it reads GPAAAGKST.

This sequence belongs to the cytidylate kinase family. Type 1 subfamily.

It localises to the cytoplasm. The enzyme catalyses CMP + ATP = CDP + ADP. It carries out the reaction dCMP + ATP = dCDP + ADP. In Listeria welshimeri serovar 6b (strain ATCC 35897 / DSM 20650 / CCUG 15529 / CIP 8149 / NCTC 11857 / SLCC 5334 / V8), this protein is Cytidylate kinase.